The following is a 193-amino-acid chain: Bcl-2-binding component 3, isoforms 1/2 (193 aa).

Disordered regions lie at residues 1–28 and 71–138; these read MARA…FPLG and ALGG…REIG. S10 is subject to Phosphoserine. The span at 71–82 shows a compositional bias: low complexity; sequence ALGGSRWPGGPR. The short motif at 137-151 is the BH3 element; it reads IGAQLRRMADDLNAQ.

This sequence belongs to the Bcl-2 family. As to quaternary structure, interacts with MCL1 and BCL2A1. Interacts (via BH3 domain) with BCL2. Interacts with BCL2L1/BCL-XL. Interacts (via BH3 domain) with NOL3/ARC (via CARD domain); this interaction prevents BBC3 association with BCL2 and results in CASP8 activation. As to expression, ubiquitously expressed.

It is found in the mitochondrion. In terms of biological role, essential mediator of p53/TP53-dependent and p53/TP53-independent apoptosis. Promotes partial unfolding of BCL2L1 and dissociation of BCL2L1 from p53/TP53, releasing the bound p53/TP53 to induce apoptosis. Regulates ER stress-induced neuronal apoptosis. The sequence is that of Bcl-2-binding component 3, isoforms 1/2 (BBC3) from Homo sapiens (Human).